Here is a 168-residue protein sequence, read N- to C-terminus: uncharacterized protein (168 aa).

4Fe-4S ferredoxin-type domains lie at 48–78 and 91–122; these read KIPK…MIPI and KIPK…ISPI. The [4Fe-4S] cluster site is built by C58, C61, C64, C68, C100, C103, C106, and C110.

This is an uncharacterized protein from Methanocaldococcus jannaschii (strain ATCC 43067 / DSM 2661 / JAL-1 / JCM 10045 / NBRC 100440) (Methanococcus jannaschii).